The primary structure comprises 207 residues: Nuclear transcription factor Y subunit beta (207 aa).

An a domain region spans residues 1–52 (MTMDGDSSTTDASQLGISADYIGGSHYVIQPHDDTEDSMNDHEDTNGSKESF). The tract at residues 27 to 52 (YVIQPHDDTEDSMNDHEDTNGSKESF) is disordered. Over residues 39 to 52 (MNDHEDTNGSKESF) the composition is skewed to basic and acidic residues. The tract at residues 53-142 (REQDIYLPIA…PLKLYLQKFR (90 aa)) is b domain. Residues 59 to 65 (LPIANVA) mediate DNA binding. The interval 86-97 (VQECVSEFISFI) is subunit association domain (SAD). Residue Lys140 forms a Glycyl lysine isopeptide (Lys-Gly) (interchain with G-Cter in ubiquitin) linkage. The tract at residues 143 to 207 (EAMKGEKGIG…ISGVQQIQFS (65 aa)) is c domain.

Belongs to the NFYB/HAP3 subunit family. In terms of assembly, heterotrimeric transcription factor composed of three components, NF-YA, NF-YB and NF-YC. NF-YB and NF-YC must interact and dimerize for NF-YA association and DNA binding. Interacts with C1QBP. In terms of processing, monoubiquitination at Lys-140 plays an important role in transcriptional activation by allowing the deposition of histone H3 methylations as well as histone H2B monoubiquitination at 'Lys-121'.

It localises to the nucleus. In terms of biological role, component of the sequence-specific heterotrimeric transcription factor (NF-Y) which specifically recognizes a 5'-CCAAT-3' box motif found in the promoters of its target genes. NF-Y can function as both an activator and a repressor, depending on its interacting cofactors. The protein is Nuclear transcription factor Y subunit beta (NFYB) of Bos taurus (Bovine).